A 38-amino-acid chain; its full sequence is Large ribosomal subunit protein bL36 (38 aa).

The protein belongs to the bacterial ribosomal protein bL36 family.

The chain is Large ribosomal subunit protein bL36 (rpmJ) from Streptococcus pneumoniae serotype 4 (strain ATCC BAA-334 / TIGR4).